The following is a 322-amino-acid chain: Lignin-forming anionic peroxidase (322 aa).

A signal peptide spans 1-27; that stretch reads MNTPTQSFRAKAAIFSLLLLSCMQCHA. Residue Q28 is modified to Pyrrolidone carboxylic acid. Disulfide bonds link C38–C118, C71–C76, C124–C318, and C203–C229. H69 (proton acceptor) is an active-site residue. Residues D70, V73, G75, D77, and S79 each contribute to the Ca(2+) site. P166 is a binding site for substrate. H196 contributes to the heme b binding site. T197 contributes to the Ca(2+) binding site. N213 carries an N-linked (GlcNAc...) asparagine glycan. Ca(2+) contacts are provided by D242, T245, and D250.

It belongs to the peroxidase family. Classical plant (class III) peroxidase subfamily. It depends on Ca(2+) as a cofactor. Heme b serves as cofactor. In terms of tissue distribution, mesophyll protoplasts and to a much lesser extent, roots and germinating seeds.

The protein localises to the secreted. The catalysed reaction is 2 a phenolic donor + H2O2 = 2 a phenolic radical donor + 2 H2O. Removal of H(2)O(2), oxidation of toxic reductants, biosynthesis and degradation of lignin, suberization, auxin catabolism, response to environmental stresses such as wounding, pathogen attack and oxidative stress. These functions might be dependent on each isozyme/isoform in each plant tissue. Functionally, plays an integral role in secondary cell wall biosynthesis by the polymerization of cinnamyl alcohols into lignin and by forming rigid cross-links between cellulose, pectin, hydroxy-proline-rich glycoproteins, and lignin. The sequence is that of Lignin-forming anionic peroxidase from Nicotiana sylvestris (Wood tobacco).